A 220-amino-acid polypeptide reads, in one-letter code: LHFPL tetraspan subfamily member 1 protein (220 aa).

Residues 1–20 form the signal peptide; the sequence is MRNSLTMVGTFWAFLSLVTA. A run of 2 helical transmembrane segments spans residues 86–106 and 122–142; these read VVTG…VLGC and AAQF…PLGW. Asn153 is a glycosylation site (N-linked (GlcNAc...) asparagine). A helical membrane pass occupies residues 165-185; the sequence is LGWAYYCAGGGAAAAMLICTW.

This sequence belongs to the LHFP family. Widely expressed. Strongly expressed in vagina and ovary. Weakly expressed in spleen, kidney, thymus, testis, brain, lung, intestine and uterus.

It localises to the membrane. The chain is LHFPL tetraspan subfamily member 1 protein from Mus musculus (Mouse).